A 318-amino-acid chain; its full sequence is Malate dehydrogenase (318 aa).

Residues glycine 11 to glycine 17 and aspartate 37 contribute to the NAD(+) site. Substrate-binding residues include arginine 86 and arginine 92. Residues asparagine 99 and valine 122–asparagine 124 contribute to the NAD(+) site. Asparagine 124 and arginine 155 together coordinate substrate. The active-site Proton acceptor is histidine 179.

Belongs to the LDH/MDH superfamily. MDH type 3 family.

It catalyses the reaction (S)-malate + NAD(+) = oxaloacetate + NADH + H(+). Catalyzes the reversible oxidation of malate to oxaloacetate. The protein is Malate dehydrogenase of Nitratiruptor sp. (strain SB155-2).